The following is a 715-amino-acid chain: Probable phospholipase YOR022C, mitochondrial (715 aa).

A mitochondrion-targeting transit peptide spans Met1 to Leu22. Disordered regions lie at residues Tyr161–Glu180, Thr242–Ile268, and Tyr311–Arg340. Positions Thr242–Thr251 are enriched in low complexity. A compositionally biased stretch (polar residues) spans Tyr311 to Ser324. Ser501 is an active-site residue. The DDHD domain maps to Leu519–Ser700.

The protein belongs to the PA-PLA1 family.

It is found in the mitochondrion. Functionally, probable phospholipase that hydrolyzes phosphatidic acid. In Saccharomyces cerevisiae (strain ATCC 204508 / S288c) (Baker's yeast), this protein is Probable phospholipase YOR022C, mitochondrial.